The sequence spans 83 residues: Cytochrome c oxidase subunit 7A2, mitochondrial (83 aa).

A mitochondrion-targeting transit peptide spans 1–23 (MLRNVLALRQIAQRTISTTSRRH). Residues 24–48 (FENKVPEKQKLFQEDNGMPVHLKGG) are Mitochondrial matrix-facing. Position 33 is an N6-acetyllysine (Lys-33). The helical transmembrane segment at 49–77 (TSDALLYRATMLLTVGGTAYAIYMLAMAA) threads the bilayer. Over 78-83 (FPKKQN) the chain is Mitochondrial intermembrane.

The protein belongs to the cytochrome c oxidase VIIa family. In terms of assembly, component of the cytochrome c oxidase (complex IV, CIV), a multisubunit enzyme composed of 14 subunits. The complex is composed of a catalytic core of 3 subunits MT-CO1, MT-CO2 and MT-CO3, encoded in the mitochondrial DNA, and 11 supernumerary subunits COX4I, COX5A, COX5B, COX6A, COX6B, COX6C, COX7A, COX7B, COX7C, COX8 and NDUFA4, which are encoded in the nuclear genome. The complex exists as a monomer or a dimer and forms supercomplexes (SCs) in the inner mitochondrial membrane with NADH-ubiquinone oxidoreductase (complex I, CI) and ubiquinol-cytochrome c oxidoreductase (cytochrome b-c1 complex, complex III, CIII), resulting in different assemblies (supercomplex SCI(1)III(2)IV(1) and megacomplex MCI(2)III(2)IV(2)). Interacts with PET100.

It localises to the mitochondrion inner membrane. It participates in energy metabolism; oxidative phosphorylation. In terms of biological role, component of the cytochrome c oxidase, the last enzyme in the mitochondrial electron transport chain which drives oxidative phosphorylation. The respiratory chain contains 3 multisubunit complexes succinate dehydrogenase (complex II, CII), ubiquinol-cytochrome c oxidoreductase (cytochrome b-c1 complex, complex III, CIII) and cytochrome c oxidase (complex IV, CIV), that cooperate to transfer electrons derived from NADH and succinate to molecular oxygen, creating an electrochemical gradient over the inner membrane that drives transmembrane transport and the ATP synthase. Cytochrome c oxidase is the component of the respiratory chain that catalyzes the reduction of oxygen to water. Electrons originating from reduced cytochrome c in the intermembrane space (IMS) are transferred via the dinuclear copper A center (CU(A)) of subunit 2 and heme A of subunit 1 to the active site in subunit 1, a binuclear center (BNC) formed by heme A3 and copper B (CU(B)). The BNC reduces molecular oxygen to 2 water molecules using 4 electrons from cytochrome c in the IMS and 4 protons from the mitochondrial matrix. The polypeptide is Cytochrome c oxidase subunit 7A2, mitochondrial (Cox7a2) (Rattus norvegicus (Rat)).